A 509-amino-acid polypeptide reads, in one-letter code: Activin receptor type-1 (509 aa).

The N-terminal stretch at 1-20 (MVDGVMILPVLVMIAFPFPS) is a signal peptide. At 21–123 (MEDEKPKVNP…FPGTQNFHLE (103 aa)) the chain is on the extracellular side. Asn102 is a glycosylation site (N-linked (GlcNAc...) asparagine). The helical transmembrane segment at 124 to 146 (VGLIILSVVFAVCLLACLLGVAL) threads the bilayer. Residues 147-509 (RKFKRRNQER…NSLDKLKTDC (363 aa)) are Cytoplasmic-facing. One can recognise a GS domain in the interval 178 to 207 (STLADLLDHSCTSGSGSGLPFLVQRTVARQ). Residues 208 to 502 (ITLLECVGKG…KTLTKIDNSL (295 aa)) enclose the Protein kinase domain. ATP-binding positions include 214–222 (VGKGRYGEV) and Lys235. Asp336 serves as the catalytic Proton acceptor. The residue at position 501 (Ser501) is a Phosphoserine.

This sequence belongs to the protein kinase superfamily. TKL Ser/Thr protein kinase family. TGFB receptor subfamily. Interacts with FKBP1A. Interacts with FCHO1. Interacts with CLU. Interacts with type II receptors AMHR2 and ACVR2A. Interacts with BMP7. Interacts with BMP9. Interacts with BMP6 (when glycosylated); the interaction may induce HAMP expression. Interacts with TSC22D1/TSC-22. Requires Mg(2+) as cofactor. It depends on Mn(2+) as a cofactor.

The protein resides in the membrane. It carries out the reaction L-threonyl-[receptor-protein] + ATP = O-phospho-L-threonyl-[receptor-protein] + ADP + H(+). The enzyme catalyses L-seryl-[receptor-protein] + ATP = O-phospho-L-seryl-[receptor-protein] + ADP + H(+). Bone morphogenetic protein (BMP) type I receptor that is involved in a wide variety of biological processes, including bone, heart, cartilage, nervous, and reproductive system development and regulation. As a type I receptor, forms heterotetrameric receptor complexes with the type II receptors AMHR2, ACVR2A ors ACVR2B. Upon binding of ligands such as BMP7 or BMP9 to the heteromeric complexes, type II receptors transphosphorylate ACVR1 intracellular domain. In turn, ACVR1 kinase domain is activated and subsequently phosphorylates SMAD1/5/8 proteins that transduce the signal. In addition to its role in mediating BMP pathway-specific signaling, suppresses TGFbeta/activin pathway signaling by interfering with the binding of activin to its type II receptor. Besides canonical SMAD signaling, can activate non-canonical signaling pathways. May promote the expression of HAMP, potentially via its interaction with BMP6. The sequence is that of Activin receptor type-1 (ACVR1) from Bos taurus (Bovine).